The chain runs to 727 residues: Putative ATP-dependent RNA helicase DHX15 (727 aa).

Residues 1-41 (MSKRKHESSDSNKKAMKKQQNKIEEEEEEITNTTTTTTTTN) are disordered. Residues 31-41 (TNTTTTTTTTN) are compositionally biased toward low complexity. The Helicase ATP-binding domain occupies 87–251 (IKVIKENQVV…FENAPLIKVP (165 aa)). Position 100–107 (100–107 (GETGSGKT)) interacts with ATP. The short motif at 198-201 (DEAH) is the DEAH box element. The Helicase C-terminal domain occupies 273-445 (AVRTVIDIHT…SVVLQLLKLG (173 aa)).

Belongs to the DEAD box helicase family. DEAH subfamily. DDX15/PRP43 sub-subfamily.

The protein localises to the nucleus. The enzyme catalyses ATP + H2O = ADP + phosphate + H(+). Its function is as follows. Pre-mRNA processing factor involved in disassembly of spliceosomes after the release of mature mRNA. This is Putative ATP-dependent RNA helicase DHX15 (dhx15) from Dictyostelium discoideum (Social amoeba).